The following is a 172-amino-acid chain: MTKQALDATIADMAGPFLASLGLELWGIELSYGGRTVVRLFVDGPEGVTIDQCAEVSRHVGLALEVEDVISSAYVLEVSSPGLERPFFRAEQMSPYVGRQIELTLIDPTPEWPGRRKFRGELLAVEGDTVVLRPEGAPAPEAEEAVLRTSWQGVRKANLIHVFPEPGHKPRR.

It belongs to the RimP family.

It localises to the cytoplasm. Functionally, required for maturation of 30S ribosomal subunits. This chain is Ribosome maturation factor RimP, found in Nitratidesulfovibrio vulgaris (strain ATCC 29579 / DSM 644 / CCUG 34227 / NCIMB 8303 / VKM B-1760 / Hildenborough) (Desulfovibrio vulgaris).